Reading from the N-terminus, the 496-residue chain is Alanine aminotransferase 1 (496 aa).

Ala2 carries the N-acetylalanine modification. At Thr22 the chain carries Phosphothreonine. An N6-(pyridoxal phosphate)lysine modification is found at Lys314.

It belongs to the class-I pyridoxal-phosphate-dependent aminotransferase family. Alanine aminotransferase subfamily. As to quaternary structure, homodimer. Pyridoxal 5'-phosphate serves as cofactor. In terms of tissue distribution, mainly expressed in liver, intestine, colon and white adipose tissue.

It is found in the cytoplasm. The enzyme catalyses L-alanine + 2-oxoglutarate = pyruvate + L-glutamate. Its pathway is amino-acid degradation; L-alanine degradation via transaminase pathway; pyruvate from L-alanine: step 1/1. In terms of biological role, catalyzes the reversible transamination between alanine and 2-oxoglutarate to form pyruvate and glutamate. Participates in cellular nitrogen metabolism and also in liver gluconeogenesis starting with precursors transported from skeletal muscles. In Mus musculus (Mouse), this protein is Alanine aminotransferase 1 (Gpt).